A 78-amino-acid polypeptide reads, in one-letter code: Molt-inhibiting hormone (78 aa).

3 disulfides stabilise this stretch: Cys-7–Cys-44, Cys-24–Cys-40, and Cys-27–Cys-53.

It localises to the secreted. Functionally, inhibits Y-organs where molting hormone (ecdysteroid) is secreted. A molting cycle is initiated when MIH secretion diminishes or stops. Also has significant hyperglycemic hormone (CHH) activity. This chain is Molt-inhibiting hormone, found in Cancer pagurus (Rock crab).